Reading from the N-terminus, the 136-residue chain is Small ribosomal subunit protein bS16 (136 aa).

Positions 114-123 (TLKARRRRAK) are enriched in basic residues. Positions 114–136 (TLKARRRRAKKEAEAASASSAEG) are disordered.

Belongs to the bacterial ribosomal protein bS16 family.

This is Small ribosomal subunit protein bS16 from Chlorobium chlorochromatii (strain CaD3).